Reading from the N-terminus, the 400-residue chain is Pyruvate dehydrogenase E1 component subunit beta-4, chloroplastic (400 aa).

The interval 1-34 (MAAASSLHAAPRVGSSSSFSSSSSAGRRSASAAR) is disordered. Residues 1 to 57 (MAAASSLHAAPRVGSSSSFSSSSSAGRRSASAARSVRVAAAAGSCAARRAGGRMVAR) constitute a chloroplast transit peptide. A compositionally biased stretch (low complexity) spans 9–34 (AAPRVGSSSSFSSSSSAGRRSASAAR). Thiamine diphosphate is bound at residue Glu136. K(+) is bound by residues Ile189, Ala237, Ile238, and Asn242.

As to quaternary structure, tetramer of 2 alpha and 2 beta subunits. Requires thiamine diphosphate as cofactor.

It is found in the plastid. The protein resides in the chloroplast. The catalysed reaction is N(6)-[(R)-lipoyl]-L-lysyl-[protein] + pyruvate + H(+) = N(6)-[(R)-S(8)-acetyldihydrolipoyl]-L-lysyl-[protein] + CO2. Functionally, the pyruvate dehydrogenase complex catalyzes the overall conversion of pyruvate to acetyl-CoA and CO(2). It contains multiple copies of three enzymatic components: pyruvate dehydrogenase (E1), dihydrolipoamide acetyltransferase (E2) and lipoamide dehydrogenase (E3). The polypeptide is Pyruvate dehydrogenase E1 component subunit beta-4, chloroplastic (Oryza sativa subsp. japonica (Rice)).